The chain runs to 584 residues: MKYRTHRCNELSLSNVGERVRVSGWVHRYRNHGGVVFIDLRDRFGITQIVCREDEKPELHQLVDSVRSEWVLSVEGTVCRRLEGMENANLATGDIEVEIEKVDILSKAKNLPFSISDDHIHVNEELRLEYRYLDMRRGQILDRLIYRHKVMLACRQYMDKQGFTEVVTPVLGKSTPEGARDYLVPSRIYPGSFYALPQSPQLFKQILMVGGLDRYFQIATCFRDEDLRADRQPEFAQIDIEMSFATPDDLFPIIEQLVVEMFSVQGIKIDLPLPRMTYQEAKDLYGTDKPDLRFGLQLRDCREHAKQFSFSIFLDQLAQGGTIKGFCVPGGADMSRKQLDVYTEFVKRYGAMGLVWIKKQENGLASNVAKFASEEVFDAMFADFSAKDNDILLLIAAPESIANQSLDHLRRLIGKERNLYNESQYNFVWITDFPLFAKEEGKICSEHHPFTSPLDEDISLLDTDPLSVRSSSYDLVLNGYEIASGSQRIHNADLQNKIFSILELSPESIKEKFGFFIDALSFGTPPHLGIALGLDRIMMVLTGAEGIREVIAFPKTQKAADLMMNAPAEIMTSQLKELNIKVTS.

E177 contributes to the L-aspartate binding site. The interval 201–204 (QLFK) is aspartate. R223 is a binding site for L-aspartate. Residues 223 to 225 (RDE) and Q232 contribute to the ATP site. Residue H447 coordinates L-aspartate. ATP is bound at residue E481. L-aspartate is bound at residue R488. 533–536 (GLDR) serves as a coordination point for ATP.

Belongs to the class-II aminoacyl-tRNA synthetase family. Type 1 subfamily. In terms of assembly, homodimer.

Its subcellular location is the cytoplasm. The catalysed reaction is tRNA(Asx) + L-aspartate + ATP = L-aspartyl-tRNA(Asx) + AMP + diphosphate. In terms of biological role, aspartyl-tRNA synthetase with relaxed tRNA specificity since it is able to aspartylate not only its cognate tRNA(Asp) but also tRNA(Asn). Reaction proceeds in two steps: L-aspartate is first activated by ATP to form Asp-AMP and then transferred to the acceptor end of tRNA(Asp/Asn). In Chlamydia caviae (strain ATCC VR-813 / DSM 19441 / 03DC25 / GPIC) (Chlamydophila caviae), this protein is Aspartate--tRNA(Asp/Asn) ligase.